Consider the following 296-residue polypeptide: 4-hydroxy-tetrahydrodipicolinate synthase (296 aa).

A pyruvate-binding site is contributed by threonine 46. Residue tyrosine 134 is the Proton donor/acceptor of the active site. Lysine 162 serves as the catalytic Schiff-base intermediate with substrate. Isoleucine 204 contributes to the pyruvate binding site.

The protein belongs to the DapA family. In terms of assembly, homotetramer; dimer of dimers.

Its subcellular location is the cytoplasm. The catalysed reaction is L-aspartate 4-semialdehyde + pyruvate = (2S,4S)-4-hydroxy-2,3,4,5-tetrahydrodipicolinate + H2O + H(+). It functions in the pathway amino-acid biosynthesis; L-lysine biosynthesis via DAP pathway; (S)-tetrahydrodipicolinate from L-aspartate: step 3/4. In terms of biological role, catalyzes the condensation of (S)-aspartate-beta-semialdehyde [(S)-ASA] and pyruvate to 4-hydroxy-tetrahydrodipicolinate (HTPA). The protein is 4-hydroxy-tetrahydrodipicolinate synthase of Clostridium novyi (strain NT).